The chain runs to 780 residues: Translation initiation factor IF-2 (780 aa).

The tract at residues 44–194 is disordered; it reads RQLDNAVDGT…TPPKPKELPE (151 aa). Over residues 53–65 the composition is skewed to basic and acidic residues; sequence TNKKAEAPKKETT. The span at 66–81 shows a compositional bias: polar residues; the sequence is SNENGNSKGPNKPNMT. Low complexity-rich tracts occupy residues 82 to 93 and 117 to 168; these read NSNEKSNKPNKP and ANTS…NNKG. The tr-type G domain occupies 281–450; the sequence is ERPPVVTIMG…LLVSEVEELK (170 aa). The G1 stretch occupies residues 290-297; that stretch reads GHVDHGKT. 290-297 contacts GTP; sequence GHVDHGKT. The segment at 315 to 319 is G2; it reads GITQH. Positions 336 to 339 are G3; the sequence is DTPG. Residues 336 to 340 and 390 to 393 each bind GTP; these read DTPGH and NKID. The G4 stretch occupies residues 390–393; the sequence is NKID. Residues 426–428 are G5; it reads SAK.

The protein belongs to the TRAFAC class translation factor GTPase superfamily. Classic translation factor GTPase family. IF-2 subfamily.

Its subcellular location is the cytoplasm. Functionally, one of the essential components for the initiation of protein synthesis. Protects formylmethionyl-tRNA from spontaneous hydrolysis and promotes its binding to the 30S ribosomal subunits. Also involved in the hydrolysis of GTP during the formation of the 70S ribosomal complex. The protein is Translation initiation factor IF-2 of Listeria welshimeri serovar 6b (strain ATCC 35897 / DSM 20650 / CCUG 15529 / CIP 8149 / NCTC 11857 / SLCC 5334 / V8).